The primary structure comprises 434 residues: MPIITDVYAREVLDSRGNPTVEVEVLTESGAFGRALVPSGASTGEHEAVELRDGDKSRYSGKGVTKAVENVNEIIAPEIVEGEFSVLDQVSIDKMMIQLDGTPNKGKLGANAILGVSIAVARAAADLLGQPLYKYLGGFNGKQLPVPMMNIVNGGSHSDAPIAFQEFMILPTGAESFKEALRWGAEIFHNLKSILSERGLETAVGDEGGFAPKFEGTEDAVETIIKAIEKAGYKPGEDVFLGFDCASSEFYENGVYDYTKFEGEHGAKRSAAEQVDYLEELIGKYPIITIEDGMDENDWDGWKQLTDRIGDKVQLVGDDLFVTNTEILSRGIEQGIGNSILIKVNQIGTLTETFEAIEMAQKAGYTAVVSHRSGETEDTTISDIAVATNAGQIKTGSLSRTDRIAKYNQLLRIEDELFETAKFDGIKSFYNLDK.

Q165 contributes to the (2R)-2-phosphoglycerate binding site. Residue E207 is the Proton donor of the active site. Mg(2+) is bound by residues D244, E291, and D318. 4 residues coordinate (2R)-2-phosphoglycerate: K343, R372, S373, and K394. K343 functions as the Proton acceptor in the catalytic mechanism.

Belongs to the enolase family. Mg(2+) is required as a cofactor.

Its subcellular location is the cytoplasm. The protein resides in the secreted. It localises to the cell surface. It catalyses the reaction (2R)-2-phosphoglycerate = phosphoenolpyruvate + H2O. It participates in carbohydrate degradation; glycolysis; pyruvate from D-glyceraldehyde 3-phosphate: step 4/5. Functionally, catalyzes the reversible conversion of 2-phosphoglycerate (2-PG) into phosphoenolpyruvate (PEP). It is essential for the degradation of carbohydrates via glycolysis. This chain is Enolase, found in Staphylococcus haemolyticus (strain JCSC1435).